The following is a 230-amino-acid chain: Voltage-gated hydrogen channel 1 (230 aa).

Residues 1 to 58 (MAGCLRHFTSVGDDTKKREWKQEDVEVAYEEPLKNTPHPFIASYSFRGALKWLLSSHK) are Cytoplasmic-facing. The helical transmembrane segment at 59–79 (FQIVIICLVILDALFVLVEVL) threads the bilayer. Residues 80 to 96 (LDLELLAEKVDHIIPEI) lie on the Extracellular side of the membrane. A helical transmembrane segment spans residues 97–119 (FHYLSISVLTFFILEIAGKLYAF). Residues 120 to 127 (RLEFFHHK) lie on the Cytoplasmic side of the membrane. Residues 128–148 (FEVFDAAIVVISFIIDIVYIS) form a helical membrane-spanning segment. Residues 149 to 155 (REDIFNA) lie on the Extracellular side of the membrane. Residues 156–176 (VGLLILLRLWRVARIVNGVIV) traverse the membrane as a helical segment. Residues 177–230 (SVKTRAEEKMHKLKEQKGSLLEKVAQLEQQCAQQEQEIGRLHKLLQEHNVFPAS) lie on the Cytoplasmic side of the membrane. Positions 178-225 (VKTRAEEKMHKLKEQKGSLLEKVAQLEQQCAQQEQEIGRLHKLLQEHN) form a coiled coil.

It belongs to the hydrogen channel family. In terms of assembly, homodimer.

The protein resides in the membrane. It is found in the cell membrane. Its function is as follows. Mediates the voltage-dependent proton permeability of excitable membranes. Forms a proton-selective channel through which protons may pass in accordance with their electrochemical gradient. The chain is Voltage-gated hydrogen channel 1 (hvcn1) from Xenopus laevis (African clawed frog).